Consider the following 321-residue polypeptide: Ribosomal RNA small subunit methyltransferase H (321 aa).

S-adenosyl-L-methionine-binding positions include Gly40–His42, Asp60, Phe84, Asp106, and Gln113.

It belongs to the methyltransferase superfamily. RsmH family.

It is found in the cytoplasm. The enzyme catalyses cytidine(1402) in 16S rRNA + S-adenosyl-L-methionine = N(4)-methylcytidine(1402) in 16S rRNA + S-adenosyl-L-homocysteine + H(+). Specifically methylates the N4 position of cytidine in position 1402 (C1402) of 16S rRNA. The polypeptide is Ribosomal RNA small subunit methyltransferase H (Haemophilus influenzae (strain PittEE)).